The sequence spans 486 residues: UDP-N-acetylmuramate--L-alanine ligase (486 aa).

129–135 (GTHGKTT) provides a ligand contact to ATP.

Belongs to the MurCDEF family.

It localises to the cytoplasm. The enzyme catalyses UDP-N-acetyl-alpha-D-muramate + L-alanine + ATP = UDP-N-acetyl-alpha-D-muramoyl-L-alanine + ADP + phosphate + H(+). It participates in cell wall biogenesis; peptidoglycan biosynthesis. Cell wall formation. In Vibrio atlanticus (strain LGP32) (Vibrio splendidus (strain Mel32)), this protein is UDP-N-acetylmuramate--L-alanine ligase.